We begin with the raw amino-acid sequence, 215 residues long: Large ribosomal subunit protein eL14 (215 aa).

At Lys79 the chain carries N6-acetyllysine. Lys85 carries the N6-acetyllysine; alternate modification. N6-succinyllysine; alternate is present on Lys85. Residue Lys124 forms a Glycyl lysine isopeptide (Lys-Gly) (interchain with G-Cter in SUMO2) linkage. Ser139 carries the post-translational modification Phosphoserine. The tract at residues 161 to 215 is disordered; sequence VPAKKITAASKKAPAQKVPAQKATGQKAAPAPKAQKGQKAPAQKAPAPKASGKKA. Tandem repeats lie at residues 171–175, 176–180, 181–185, 186–190, 193–195, and 196–198. Residues 171–190 are 4 X 5 AA tandem repeats of Q-K-A-[PAS]-X; sequence KKAPAQKVPAQKATGQKAAP. Residues 193–198 form a 2 X 3 AA tandem repeats of K-[GA]-Q region; sequence KAQKGQ. Residue Lys204 is modified to N6-succinyllysine.

This sequence belongs to the eukaryotic ribosomal protein eL14 family. As to quaternary structure, component of the large ribosomal subunit.

It localises to the cytoplasm. Component of the large ribosomal subunit. The ribosome is a large ribonucleoprotein complex responsible for the synthesis of proteins in the cell. The protein is Large ribosomal subunit protein eL14 (RPL14) of Homo sapiens (Human).